The primary structure comprises 436 residues: Gustatory receptor for sugar taste 61a (436 aa).

Residues 1-78 lie on the Cytoplasmic side of the membrane; sequence MSRTSDDIRK…PQDVKFKVRS (78 aa). The helical transmembrane segment at 79 to 99 threads the bilayer; that stretch reads IGLAVTGLFLLLGGMKTLVGA. The Extracellular portion of the chain corresponds to 100 to 111; sequence NILFTEGLNAKN. The helical transmembrane segment at 112-132 threads the bilayer; that stretch reads IVGLVFLIVGMVNWLNFVGFA. Residues 133–164 lie on the Cytoplasmic side of the membrane; the sequence is RSWSHIMLPWSSVDILMLFPPYKRGKRSLRSK. A helical membrane pass occupies residues 165-185; the sequence is VNVLALSVVVLAVGDHMLYYA. At 186–214 the chain is on the extracellular side; sequence SGYCSYSMHILQCHTNHSRITFGLYLEKE. A glycan (N-linked (GlcNAc...) asparagine) is linked at asparagine 201. The helical transmembrane segment at 215 to 235 threads the bilayer; the sequence is FSDIMFIMPFNIFSMCYGFWL. The Cytoplasmic portion of the chain corresponds to 236–237; sequence NG. A helical membrane pass occupies residues 238–258; sequence AFTFLWNFMDIFIVMTSIGLA. Residues 259–304 are Extracellular-facing; that stretch reads QRFQQFAARVGALEGRHVPEALWYDIRRDHIRLCELASLVEASMSN. Residues 305 to 325 traverse the membrane as a helical segment; the sequence is IVFVSCANNVYVICNQALAIF. Residues 326-334 lie on the Cytoplasmic side of the membrane; sequence TKLRHPINY. The helical transmembrane segment at 335–355 threads the bilayer; the sequence is VYFWYSLIFLLARTSLVFMTA. The Extracellular segment spans residues 356–436; that stretch reads SKIHDASLLP…AKSHKGLRCA (81 aa).

It belongs to the insect chemoreceptor superfamily. Gustatory receptor (GR) family. Gr5a subfamily. Expressed in sweet sensing neurons of classical chemosensory sensilla, but also in two supersensitive neurons of atypical taste sensilla.

It is found in the cell membrane. Its function is as follows. One of the few identified sugar gustatory receptors identified so far with glucose being its primary ligand and which mediates acceptance behavior. The sequence is that of Gustatory receptor for sugar taste 61a (Gr61a) from Drosophila melanogaster (Fruit fly).